The chain runs to 291 residues: MASNVLNRYLFEDLSVRGELVQLDEAYQRIISSKDYPAALQKLLGELLVSTTLLTATLKFEGSITIQLQGDGPVSLAVINGDNEQKIRGVARWEGHIADDATLHDMMGKGYMVITIEPKKGERYQGIVGLEGDNLEQVLEGYFERSEQLKTRIWIRTGEHEGKAHAAGMLIQVMPDGTGSENDFEHLEQLTNTVKNEELFTLPANELLYRLYNQEQVRLFEPQNVEFRCGCSRERSGAAIVTVDKNEIYDILASDGSVSLHCDYCGTTYSFDESDVNKLYEEAASEPKTLH.

Intrachain disulfides connect Cys229/Cys231 and Cys262/Cys265.

It belongs to the HSP33 family. Under oxidizing conditions two disulfide bonds are formed involving the reactive cysteines. Under reducing conditions zinc is bound to the reactive cysteines and the protein is inactive.

The protein resides in the cytoplasm. In terms of biological role, redox regulated molecular chaperone. Protects both thermally unfolding and oxidatively damaged proteins from irreversible aggregation. Plays an important role in the bacterial defense system toward oxidative stress. The polypeptide is 33 kDa chaperonin (Vibrio vulnificus (strain YJ016)).